The sequence spans 206 residues: Probable GTP-binding protein EngB (206 aa).

An EngB-type G domain is found at Asp-7–Asp-195. GTP-binding positions include Gly-15–Ser-22, Gly-41–Ser-45, Asp-60–Gly-63, Asn-140–Asp-143, and Ile-175–Ala-177. Mg(2+)-binding residues include Ser-22 and Thr-43.

This sequence belongs to the TRAFAC class TrmE-Era-EngA-EngB-Septin-like GTPase superfamily. EngB GTPase family. It depends on Mg(2+) as a cofactor.

Functionally, necessary for normal cell division and for the maintenance of normal septation. This is Probable GTP-binding protein EngB from Haloquadratum walsbyi (strain DSM 16790 / HBSQ001).